We begin with the raw amino-acid sequence, 124 residues long: MTKIKQEIYNKRPTSPHLTIYKPQISSTLSILHRMTGVALFFVVSILVWWLILSKYDNNYLQLASCCIIKICLVAFSYSWCYHLCNGIRHLFWDIGYGFSIKAVNITGWCVVVCSILLTMLLWV.

The Cytoplasmic segment spans residues 1-29; sequence MTKIKQEIYNKRPTSPHLTIYKPQISSTL. The helical transmembrane segment at 30–55 threads the bilayer; that stretch reads SILHRMTGVALFFVVSILVWWLILSK. The Periplasmic segment spans residues 56-67; that stretch reads YDNNYLQLASCC. A helical transmembrane segment spans residues 68 to 88; that stretch reads IIKICLVAFSYSWCYHLCNGI. Heme is bound at residue histidine 83. The Cytoplasmic portion of the chain corresponds to 89–103; the sequence is RHLFWDIGYGFSIKA. The helical transmembrane segment at 104–124 threads the bilayer; the sequence is VNITGWCVVVCSILLTMLLWV.

It belongs to the cytochrome b560 family. In terms of assembly, part of an enzyme complex containing four subunits: a flavoprotein, an iron-sulfur protein, plus two membrane-anchoring proteins, SdhC and SdhD. The complex can form homotrimers. Heme serves as cofactor.

The protein resides in the cell inner membrane. The protein operates within carbohydrate metabolism; tricarboxylic acid cycle. In terms of biological role, membrane-anchoring subunit of succinate dehydrogenase (SDH). This chain is Succinate dehydrogenase cytochrome b556 subunit (sdhC), found in Rickettsia prowazekii (strain Madrid E).